The following is a 938-amino-acid chain: Isoleucine--tRNA ligase (938 aa).

A 'HIGH' region motif is present at residues 58-68 (PYANGSIHIGH). At lysine 183 the chain carries N6-acetyllysine. Glutamate 561 is an L-isoleucyl-5'-AMP binding site. The 'KMSKS' region signature appears at 602-606 (KMSKS). Position 605 (lysine 605) interacts with ATP. Zn(2+) is bound by residues cysteine 901, cysteine 904, cysteine 921, and cysteine 924.

Belongs to the class-I aminoacyl-tRNA synthetase family. IleS type 1 subfamily. As to quaternary structure, monomer. Zn(2+) is required as a cofactor.

It localises to the cytoplasm. It carries out the reaction tRNA(Ile) + L-isoleucine + ATP = L-isoleucyl-tRNA(Ile) + AMP + diphosphate. Its function is as follows. Catalyzes the attachment of isoleucine to tRNA(Ile). As IleRS can inadvertently accommodate and process structurally similar amino acids such as valine, to avoid such errors it has two additional distinct tRNA(Ile)-dependent editing activities. One activity is designated as 'pretransfer' editing and involves the hydrolysis of activated Val-AMP. The other activity is designated 'posttransfer' editing and involves deacylation of mischarged Val-tRNA(Ile). The chain is Isoleucine--tRNA ligase from Shigella boydii serotype 4 (strain Sb227).